Reading from the N-terminus, the 371-residue chain is Cytochrome b (371 aa).

4 helical membrane-spanning segments follow: residues 25–45 (FGSM…FLAI), 69–90 (WIMQ…YTHI), 105–125 (WLSG…GYVL), and 170–190 (FFAL…IHII). Heme b-binding residues include His-75 and His-89. The heme b site is built by His-174 and His-188. Residue His-193 coordinates a ubiquinone. The next 4 helical transmembrane spans lie at 218–238 (YKDT…LSFT), 280–300 (LGGT…PFTH), 312–332 (LAQT…WTAS), and 339–358 (FIII…IMNP).

This sequence belongs to the cytochrome b family. The cytochrome bc1 complex contains 3 respiratory subunits (MT-CYB, CYC1 and UQCRFS1), 2 core proteins (UQCRC1 and UQCRC2) and probably 6 low-molecular weight proteins. The cofactor is heme b.

Its subcellular location is the mitochondrion inner membrane. In terms of biological role, component of the ubiquinol-cytochrome c reductase complex (complex III or cytochrome b-c1 complex) that is part of the mitochondrial respiratory chain. The b-c1 complex mediates electron transfer from ubiquinol to cytochrome c. Contributes to the generation of a proton gradient across the mitochondrial membrane that is then used for ATP synthesis. This chain is Cytochrome b (MT-CYB), found in Sinomicrurus macclellandi (Macclelland's coral snake).